The following is a 45-amino-acid chain: DVCDSLVEGRCIHNGCWCDEEAPHGNCCDTAGCTAWWWCPGTKWD.

Intrachain disulfides connect Cys-3–Cys-16, Cys-11–Cys-28, Cys-18–Cys-33, and Cys-27–Cys-39. Trp-17 carries the post-translational modification 6'-bromotryptophan. The residue at position 21 (Glu-21) is a 4-carboxyglutamate. Residue Pro-23 is modified to 4-hydroxyproline. 2 positions are modified to 6'-bromotryptophan: Trp-37 and Trp-38. Residue Pro-40 is modified to 4-hydroxyproline. Trp-44 is modified (6'-bromotryptophan).

As to expression, expressed by the venom duct.

The protein resides in the secreted. In terms of biological role, mu-conotoxins block voltage-gated sodium channels. This toxin reversibly blocks voltage-gated sodium channel in cephalopods, with no alteration in the voltage dependence of sodium conductance or on the kinetics of inactivation. In Californiconus californicus (California cone), this protein is Mu-conotoxin-like Cal 12.1.1d.